Consider the following 843-residue polypeptide: Translation initiation factor IF-2 (843 aa).

The tract at residues 198 to 219 (YKREEEEKKSKAKKAGGKGFKK) is disordered. A compositionally biased stretch (basic residues) spans 207-219 (SKAKKAGGKGFKK). In terms of domain architecture, tr-type G spans 345 to 512 (SRAPVVTIMG…AVLLQSEVLE (168 aa)). The tract at residues 354–361 (GHVDHGKT) is G1. 354 to 361 (GHVDHGKT) lines the GTP pocket. Positions 379 to 383 (GITQH) are G2. The segment at 400–403 (DTPG) is G3. GTP contacts are provided by residues 400 to 404 (DTPGH) and 454 to 457 (NKID). Residues 454–457 (NKID) form a G4 region. A G5 region spans residues 490–492 (SAK).

It belongs to the TRAFAC class translation factor GTPase superfamily. Classic translation factor GTPase family. IF-2 subfamily.

It is found in the cytoplasm. One of the essential components for the initiation of protein synthesis. Protects formylmethionyl-tRNA from spontaneous hydrolysis and promotes its binding to the 30S ribosomal subunits. Also involved in the hydrolysis of GTP during the formation of the 70S ribosomal complex. The sequence is that of Translation initiation factor IF-2 from Francisella tularensis subsp. tularensis (strain WY96-3418).